Reading from the N-terminus, the 388-residue chain is 1-deoxy-D-xylulose 5-phosphate reductoisomerase (388 aa).

Positions 10, 11, 12, 13, 37, and 121 each coordinate NADPH. Lys122 is a binding site for 1-deoxy-D-xylulose 5-phosphate. Glu123 lines the NADPH pocket. Asp147 contributes to the Mn(2+) binding site. Residues Ser148, Glu149, Ser173, and His196 each contribute to the 1-deoxy-D-xylulose 5-phosphate site. Position 149 (Glu149) interacts with Mn(2+). Position 202 (Gly202) interacts with NADPH. Residues Ser209, Asn214, Lys215, and Glu218 each contribute to the 1-deoxy-D-xylulose 5-phosphate site. Glu218 is a binding site for Mn(2+).

This sequence belongs to the DXR family. Requires Mg(2+) as cofactor. Mn(2+) is required as a cofactor.

The enzyme catalyses 2-C-methyl-D-erythritol 4-phosphate + NADP(+) = 1-deoxy-D-xylulose 5-phosphate + NADPH + H(+). Its pathway is isoprenoid biosynthesis; isopentenyl diphosphate biosynthesis via DXP pathway; isopentenyl diphosphate from 1-deoxy-D-xylulose 5-phosphate: step 1/6. Catalyzes the NADPH-dependent rearrangement and reduction of 1-deoxy-D-xylulose-5-phosphate (DXP) to 2-C-methyl-D-erythritol 4-phosphate (MEP). In Lachnoclostridium phytofermentans (strain ATCC 700394 / DSM 18823 / ISDg) (Clostridium phytofermentans), this protein is 1-deoxy-D-xylulose 5-phosphate reductoisomerase.